Consider the following 1091-residue polypeptide: Self-sufficient cytochrome P450 monooxygenase CYP505E1 (1091 aa).

Cysteine 433 lines the heme pocket. The Flavodoxin-like domain occupies 528 to 669 (ICFFYGSNSG…DLEAWEETSL (142 aa)). FMN-binding positions include 534–538 (SNSGT) and 613–645 (VFGC…TRLA). In terms of domain architecture, FAD-binding FR-type spans 707 to 935 (KDLMEARVTT…RPAKEAFHLP (229 aa)).

It in the N-terminal section; belongs to the cytochrome P450 family. The cofactor is FAD. Requires FMN as cofactor. Heme is required as a cofactor.

It carries out the reaction 2 oxidized [cytochrome P450] + NADPH = 2 reduced [cytochrome P450] + NADP(+) + H(+). The enzyme catalyses an organic molecule + reduced [NADPH--hemoprotein reductase] + O2 = an alcohol + oxidized [NADPH--hemoprotein reductase] + H2O + H(+). It catalyses the reaction dodecanoate + reduced [NADPH--hemoprotein reductase] + O2 = 5-hydroxydodecanoate + oxidized [NADPH--hemoprotein reductase] + H2O + H(+). The catalysed reaction is tetradecanoate + reduced [NADPH--hemoprotein reductase] + O2 = 7-hydroxytetradecanoate + oxidized [NADPH--hemoprotein reductase] + H2O + H(+). It carries out the reaction dodecan-1-ol + reduced [NADPH--hemoprotein reductase] + O2 = 1,5-dodecanediol + oxidized [NADPH--hemoprotein reductase] + H2O + H(+). The enzyme catalyses dodecan-1-ol + reduced [NADPH--hemoprotein reductase] + O2 = 1,4-dodecanediol + oxidized [NADPH--hemoprotein reductase] + H2O + H(+). It catalyses the reaction dodecan-1-ol + reduced [NADPH--hemoprotein reductase] + O2 = 1,6-dodecanediol + oxidized [NADPH--hemoprotein reductase] + H2O + H(+). In terms of biological role, self-sufficient cytochrome P450 monooxygenase that catalyzes the regioselective in-chain hydroxylation of alkanes, fatty alcohols, and fatty acids at the omega-7 position. Performs hydroxylation of C10-C16 n-alkanes and C12 and C14 fatty alcohols; and thereby enables the one step biocatalytic synthesis of rare alcohols such as 5-dodecanol and 7-tetradecanol. Converts 1-dodecanol into 1,5-dodecanediol as major product with very little sub-terminally hydroxylated products with the 1,4-dodecanediol and 1,6-dodecanediol more abundant. Converts dodecanoic acid to 5-hydroxydodecanoic acid which can be further converted into delta-dodecalactone by lactonization of the 5-hydroxy acid at low pH. Also gives sub-terminal hydroxylation of dodecanoic acid with 9-hydroxydodecanoic acid being the second most abundant product. The sequence is that of Self-sufficient cytochrome P450 monooxygenase CYP505E1 from Aspergillus niger (strain ATCC MYA-4892 / CBS 513.88 / FGSC A1513).